The following is a 165-amino-acid chain: Disulfide bond formation protein B (165 aa).

The Cytoplasmic portion of the chain corresponds to 1-10 (MPAWLTNRTI). Residues 11–27 (YFLCFLAIAGLMGFAFY) form a helical membrane-spanning segment. Topologically, residues 28–45 (LQYVKDLEPCPLCMAQRI) are periplasmic. Cys-37 and Cys-40 form a disulfide bridge. A helical transmembrane segment spans residues 46–62 (AFVLAGLVFLAAALHNP). Over 63 to 68 (KNTGTT) the chain is Cytoplasmic. The chain crosses the membrane as a helical span at residues 69 to 86 (VYAFLGWVTTLGGAALAT). Over 87-143 (RQLWLQSLPADQVPACGPGLEYMLEAFPFSEVLTMMLTGTGECAEVQWTFLGLSIPG) the chain is Periplasmic. Cys-102 and Cys-129 are joined by a disulfide. Residues 144–162 (WTLVAFIGFTAVWAFAWVR) form a helical membrane-spanning segment. At 163–165 (RPR) the chain is on the cytoplasmic side.

The protein belongs to the DsbB family.

It localises to the cell inner membrane. Functionally, required for disulfide bond formation in some periplasmic proteins. Acts by oxidizing the DsbA protein. The sequence is that of Disulfide bond formation protein B from Hahella chejuensis (strain KCTC 2396).